Reading from the N-terminus, the 312-residue chain is Probable deoxyhypusine synthase (312 aa).

Lysine 285 serves as the catalytic Nucleophile.

It belongs to the deoxyhypusine synthase family. NAD(+) serves as cofactor.

The enzyme catalyses [eIF5A protein]-L-lysine + spermidine = [eIF5A protein]-deoxyhypusine + propane-1,3-diamine. The protein operates within protein modification; eIF5A hypusination. Its function is as follows. Catalyzes the NAD-dependent oxidative cleavage of spermidine and the subsequent transfer of the butylamine moiety of spermidine to the epsilon-amino group of a specific lysine residue of the eIF-5A precursor protein to form the intermediate deoxyhypusine residue. This is Probable deoxyhypusine synthase from Saccharolobus islandicus (strain M.16.4 / Kamchatka #3) (Sulfolobus islandicus).